The chain runs to 170 residues: Cilia- and flagella-associated protein 276 (170 aa).

Disordered stretches follow at residues 1–37 and 151–170; these read MPLTRDPFQNPALDKDDSYLGKSRASKKLPYKNPTHL and HTAATNGGYSRKNDGGFFST.

In terms of assembly, microtubule inner protein component of sperm flagellar doublet microtubules. In terms of tissue distribution, expressed in trachea multiciliated cells.

The protein localises to the cytoplasm. It localises to the cytoskeleton. Its subcellular location is the cilium axoneme. It is found in the flagellum axoneme. In terms of biological role, microtubule inner protein (MIP) part of the dynein-decorated doublet microtubules (DMTs) in cilia axoneme, which is required for motile cilia beating. May play an important role for the maintenance of myelin-axon integrity. May affect intracellular Ca(2+) homeostasis. In Bos taurus (Bovine), this protein is Cilia- and flagella-associated protein 276.